Consider the following 369-residue polypeptide: Putative FAD-dependent monooxygenase YetM (369 aa).

The N-terminal stretch at 1-32 (MKHMLIAGGGIGGLSAAISLRKAGFSVTLCEA) is a signal peptide. FAD is bound by residues Gly-12, 31–32 (EA), Val-126, and Asp-285.

It depends on FAD as a cofactor.

The protein is Putative FAD-dependent monooxygenase YetM (yetM) of Bacillus subtilis (strain 168).